Reading from the N-terminus, the 70-residue chain is Protease inhibitor HPI (70 aa).

A2 bears the N-acetylalanine mark. C5 carries the post-translational modification S-glutathionyl cysteine; alternate.

Belongs to the protease inhibitor I13 (potato type I serine protease inhibitor) family. Monomer and homodimer; disulfide-linked. Occurs in 3 forms that differ in the modification of Cys-5, HPI-1 forms a homodimer through a disulfide bond, HPI-2a is modified by glutathionylation, and HPI-2b is covalently modified by addition of an unidentified adduct but not by a disulfide linkage.

Its function is as follows. Inhibitor of serine proteases, strongly inhibits subtilisin A and weakly inhibits trypsin. Does not inhibit chymotrypsin, papain, pepsin, pronase E, protease type XIII and thermolysin. HPI-1 inhibits subtilisin A with an Ki of 0.21 nM. HPI-2a inhibits subtilisin A with an Ki of 0.08 nM. HPI-2b inhibits subtilisin A with an Ki of 0.1 nM. This is Protease inhibitor HPI from Hevea brasiliensis (Para rubber tree).